Consider the following 233-residue polypeptide: Glutathione S-transferase U15 (233 aa).

The 81-residue stretch at Glu-5 to Gly-85 folds into the GST N-terminal domain. Glutathione is bound by residues Ser-15–Pro-16, Ser-42–Lys-43, Lys-56–Val-57, and Val-69–Ser-70. One can recognise a GST C-terminal domain in the interval His-92–Phe-219. Position 158 is a phosphothreonine (Thr-158).

This sequence belongs to the GST superfamily. Tau family.

The protein localises to the cytoplasm. It localises to the cytosol. It catalyses the reaction RX + glutathione = an S-substituted glutathione + a halide anion + H(+). Functionally, may be involved in the conjugation of reduced glutathione to a wide number of exogenous and endogenous hydrophobic electrophiles and have a detoxification role against certain herbicides. The sequence is that of Glutathione S-transferase U15 (GSTU15) from Arabidopsis thaliana (Mouse-ear cress).